A 271-amino-acid polypeptide reads, in one-letter code: Octanoyltransferase LipM (271 aa).

In terms of domain architecture, BPL/LPL catalytic spans 31-242 (GHNKPTLRFY…GLAEQFNVEF (212 aa)). Cys-144 serves as the catalytic Acyl-thioester intermediate.

Belongs to the octanoyltransferase LipM family. In terms of assembly, monomer.

It carries out the reaction octanoyl-[ACP] + L-lysyl-[protein] = N(6)-octanoyl-L-lysyl-[protein] + holo-[ACP] + H(+). The protein operates within protein modification; protein lipoylation via endogenous pathway; protein N(6)-(lipoyl)lysine from octanoyl-[acyl-carrier-protein]. Its function is as follows. Catalyzes the transfer of endogenously produced octanoic acid from octanoyl-acyl-carrier-protein onto the lipoyl domain of GcvH, an intermediate carrier during protein lipoylation. This Clostridioides difficile (strain 630) (Peptoclostridium difficile) protein is Octanoyltransferase LipM.